The sequence spans 180 residues: Small ribosomal subunit protein uS5 (180 aa).

The disordered stretch occupies residues 1 to 20 (MAKMQGRMQGKVAPGDDRGD). Positions 22 to 85 (LKEKMVAINR…DEARRKMIKV (64 aa)) constitute an S5 DRBM domain.

Belongs to the universal ribosomal protein uS5 family. As to quaternary structure, part of the 30S ribosomal subunit. Contacts proteins S4 and S8.

With S4 and S12 plays an important role in translational accuracy. In terms of biological role, located at the back of the 30S subunit body where it stabilizes the conformation of the head with respect to the body. In Nitrosospira multiformis (strain ATCC 25196 / NCIMB 11849 / C 71), this protein is Small ribosomal subunit protein uS5.